A 263-amino-acid polypeptide reads, in one-letter code: Phosphoinositide-3-kinase-interacting protein 1 (263 aa).

The signal sequence occupies residues 1–21; it reads MLLAWVQAFLVSNMLLAEAYG. Residues 22-168 lie on the Extracellular side of the membrane; that stretch reads SGGCFWDNGH…NSKEKKDLGT (147 aa). One can recognise a Kringle domain in the interval 24–101; sequence GCFWDNGHLY…EKRPCEDLRC (78 aa). 3 disulfide bridges follow: Cys25-Cys101, Cys46-Cys82, and Cys70-Cys96. An O-linked (GalNAc...) serine glycan is attached at Ser39. A glycan (N-linked (GlcNAc...) (complex) asparagine) is linked at Asn66. A helical transmembrane segment spans residues 169–189; sequence LGYVLGITMMVIIIAIGAGII. Topologically, residues 190-263 are cytoplasmic; it reads LGYSYKRGKD…LMGQAGTPGA (74 aa). The span at 242–251 shows a compositional bias: polar residues; sequence QTPVDPQEGT. The disordered stretch occupies residues 242–263; the sequence is QTPVDPQEGTTPLMGQAGTPGA.

In terms of processing, N- and O-glycosylated. O-glycosylated with core 1 or possibly core 8 glycans. N-glycan heterogeneity at Asn-66: dHex1Hex5HexNAc4 (major) and dHex1Hex6HexNAc5 (minor).

The protein localises to the cell membrane. Negative regulator of hepatic phosphatidylinositol 3-kinase (PI3K) activity. The polypeptide is Phosphoinositide-3-kinase-interacting protein 1 (PIK3IP1) (Homo sapiens (Human)).